The primary structure comprises 81 residues: Sulfur carrier protein TusA (81 aa).

Residue Cys-19 is the Cysteine persulfide intermediate of the active site.

Belongs to the sulfur carrier protein TusA family.

It is found in the cytoplasm. Sulfur carrier protein which probably makes part of a sulfur-relay system. The polypeptide is Sulfur carrier protein TusA (Shewanella sediminis (strain HAW-EB3)).